The sequence spans 1909 residues: MEDRRPHLEARPRNPPANHRGPMDGELPPRARNQTNNPAATNHAGRHLRASNHPAPFRQREERFRAMGRNPHQGRRNQEGHTSDEARDQRQSQNDTRRRNDDQEGRSHRPPWSSDTFQQWHTPPQKPGEQPQQTKRLGYKFLESLLQKEPSEVAITLATSLGLKELLSHSSMKPSFLQLICQVLRKACSSRIDRQSILHVLGILNNSKFLRVCLPAYVVGMITEPSPDIRNQYPEHISNIISLLQDLVSVFPASSMQETSMLISLLPTSLNALRASGVDIEEETEKNLEKVQAIIKYLQEKRRQGSLRVDTYTLVQAEAEGEVESYRAMPIYPTYNEVHLDEKPFLRPNIISGKYESTAVYLDTHFRLLREDFVRPLREGILKLLQSFEDQCLRKRKFDDIRIYFDARIITPMCSASGIVYKVQFDTKPLKLVRWQNSKRLLYGSLVCMSKDNFETFLFATVSNREHEDLCQGIVQLCFNEQSQQLLADVQPSDSFLMVETTAYFEAYRHVLEGLQEVQEEDVPFQRNIVQCDSYVRNPRYLLMGGRYDFTPLMENPSAMRKSLRGAEALRHPRINVFDFGQWPSKEALKLDDSQMEALQFALTKELAIIQGPPGTGKTYVGLKIVQALLTNKSVWQINTQTFPILVVCYTNHALDQFLEGIYGCQKTSIVRVGGRSNSEILKQFTLRELRNKREFRRTLPMHLRRAYMSIVTEMKESEQKLQEGAQTLECTMHGVLREQHLEKYISAQHWESLMSGPVQDADWVCVQPSKHSMILEWLGLGVGSFTQSASPAGPENTAQAEGEEEEEGEEEGSLIEIAEEADLIQADRVIEEEEVVRPRRRKKEENGTDQELAKMLLAMRLDQEVPGTTAGPEQATEEWETQRGQKKKMKRRVKVELRKLNTMTKAEANGIQDVWQLDLSSRWQLYRLWLQMYQADTRRRILSYERQYRTWAERMAELRLQEDLHILKDAEVVGMTTTGAAKYRQILQQVEPRIVIVEEAAEVLEAHTIATLSKACQHLILIGDHQQLRPSANVYDLAKNFNLEVSLFERLVKVNIPFVRLNYQHRMRPEIARLLTPHIYQDLENHPSVLKYEQIKGVSSNLFFVEHNFPEQEIQEGKSHQNQHEAHFVVELCQYLLCQEYLPSQITILTTYTGQLFCLRKLMPVKTFAGIKVHVVDKYQGEENDIILLSLVRSNQEGKVGFLQIPNRICVALSRAKKGMYCIGNMQMLAKVPLWSRIIHTLRENNQIGPSLRLCCQNHPETHTLVSKASDFQKVPEGGCSRPCEFRLACGHVCTRACHPYDSSHKEFQCMKPCQKVLCQDGHRCPNVCFQECQPCQVKVPKIILKCGHKQMVPCSMSESEFCCQEPCSKILRCGHRCSHLCGEDCVRLCSERVTVELKCGHSQLVKCGNVEDIKYGLPVKCTTKCDTTLDCGHPCPGSCHSCFEGRFHERCQQPCKRLLICSHKCQEPCTGECPPCQRTCQNRCVHSQCKKKCGELCSPCVEPCVWRCQHYQCTKLCSEPCNRPPCYVPCTKLLACGHPCIGLCGEPCPKKCRVCQPDEVTQIFFGFEDEPDARFVQLEDCSHIFEVQALDRFMNEQKDDEVAIKLKVCPICQVPIRKNLRYGTSIKQRLEEIEIVKEKIQGSAGEISTSQEQLKALLKSKTLFHQLRPEEFLILQEKLAQKNLSVKDLGLVENSIRFYDHLANLEGSLEKVHCGEQQSVRTRLEQVHEWLAKKRLSFSSQELSDLQSEIQRLTYLVNLLMRCKMAEKVKGSIAEEVSSIRNILEKTSKFTQEDEQLVQKKMDALKTTLPCSGLGISDEERVQIVTAMGVPRGHWFKCPNGHIYVITECGGAMQRSTCPECQEVIGGENHTLERSNHLASEMDGAQHPAWSNTANNFMNFEEIHRMM.

2 stretches are compositionally biased toward basic and acidic residues: residues 1-12 (MEDRRPHLEARP) and 76-107 (RNQE…EGRS). 2 disordered regions span residues 1–133 (MEDR…QPQQ) and 787–813 (TQSA…EEEG). Polar residues predominate over residues 113–122 (SSDTFQQWHT). Acidic residues predominate over residues 802 to 813 (EGEEEEEGEEEG). Residues 939–964 (RRRILSYERQYRTWAERMAELRLQED) adopt a coiled-coil conformation. 4 NF-X1-type zinc fingers span residues 1291–1313 (CGHV…QCMK), 1375–1393 (CGHR…LCSE), 1433–1455 (CGHP…RCQQ), and 1463–1480 (CSHK…PCQR). Residues 1733–1764 (LAKKRLSFSSQELSDLQSEIQRLTYLVNLLMR) adopt a coiled-coil conformation. The RZ-type zinc finger occupies 1818–1889 (ISDEERVQIV…LASEMDGAQH (72 aa)). Positions 1840, 1844, 1860, and 1863 each coordinate Zn(2+).

This sequence belongs to the ZNFX1 family. Interacts with MAVS.

It localises to the mitochondrion outer membrane. Its subcellular location is the cytoplasm. It is found in the stress granule. In terms of biological role, RNA-binding protein that initiates the antiviral response and is required to restrict the replication of RNA viruses. Acts as a double-stranded RNA (dsRNA) sensor that recognizes viral RNA and then interacts with MAVS to initiate the type I interferon response. Also required for immunity against some bacteria, such as mycobacteria. This chain is NFX1-type zinc finger-containing protein 1, found in Mus musculus (Mouse).